The primary structure comprises 66 residues: KEGYIVNYYDGCKYACVKLGDNDYCLRECRLRYYKSAGGYCYAFACWCTHLYEQAVVWPLPNKTCN.

An LCN-type CS-alpha/beta domain is found at 1–66 (KEGYIVNYYD…VWPLPNKTCN (66 aa)). 4 cysteine pairs are disulfide-bonded: C12-C65, C16-C41, C25-C46, and C29-C48.

As to expression, expressed by the venom gland.

The protein localises to the secreted. Its function is as follows. Beta toxins bind voltage-independently at site-4 of sodium channels (Nav) and reduces peak current and shifts the voltage of activation toward more negative potentials thereby affecting sodium channel activation and promoting spontaneous and repetitive firing. This toxin is strongly toxic to mice. This Centruroides villegasi (Scorpion) protein is Beta-mammal toxin Cv3.